A 316-amino-acid polypeptide reads, in one-letter code: Ribosomal RNA small subunit methyltransferase H (316 aa).

S-adenosyl-L-methionine contacts are provided by residues 35-37 (GGH), Asp-55, Phe-79, Asp-101, and Gln-108.

This sequence belongs to the methyltransferase superfamily. RsmH family.

The protein localises to the cytoplasm. It catalyses the reaction cytidine(1402) in 16S rRNA + S-adenosyl-L-methionine = N(4)-methylcytidine(1402) in 16S rRNA + S-adenosyl-L-homocysteine + H(+). In terms of biological role, specifically methylates the N4 position of cytidine in position 1402 (C1402) of 16S rRNA. The polypeptide is Ribosomal RNA small subunit methyltransferase H (Aliivibrio fischeri (strain ATCC 700601 / ES114) (Vibrio fischeri)).